Consider the following 129-residue polypeptide: ALK and LTK ligand 1 (129 aa).

The first 27 residues, 1–27 (MRPLKPGAPLPALFLLALALSPHGAHG), serve as a signal peptide directing secretion. A disordered region spans residues 24–63 (GAHGRPRGRRGARVTDKEPKPLLFLPAAGAGRTPSGSRSA). The span at 25 to 35 (AHGRPRGRRGA) shows a compositional bias: basic residues. 2 disulfide bridges follow: Cys-90–Cys-126 and Cys-104–Cys-113.

The protein belongs to the ALKAL family. As to expression, widely expressed with highest levels in thyroid and moderate levels in stomach, trachea, small intestine, prostate and brain.

It localises to the secreted. The protein resides in the cell membrane. Cytokine that acts as a physiological ligand for receptor tyrosine kinase LTK, leading to its activation. Monomeric ALKAL1 binds to LTK, leading to LTK homodimerization and activation. In contrast to ALKAL2, does not act as a potent physiological ligand for ALK. This chain is ALK and LTK ligand 1, found in Homo sapiens (Human).